A 403-amino-acid chain; its full sequence is Flavohemoprotein (403 aa).

One can recognise a Globin domain in the interval 1-138 (MLTQKTKDIV…LADILAGMES (138 aa)). A heme b-binding site is contributed by histidine 85. Catalysis depends on charge relay system residues tyrosine 95 and glutamate 137. The reductase stretch occupies residues 149-403 (GGWAGWRRFI…EVFGPDLFAE (255 aa)). An FAD-binding FR-type domain is found at 152-262 (AGWRRFIVRE…AAPYGNFYID (111 aa)). FAD is bound by residues tyrosine 190 and 206–209 (RQYS). Residue 275–280 (GVGLTP) participates in NADP(+) binding. 395-398 (VFGP) provides a ligand contact to FAD.

Belongs to the globin family. Two-domain flavohemoproteins subfamily. This sequence in the C-terminal section; belongs to the flavoprotein pyridine nucleotide cytochrome reductase family. The cofactor is heme b. Requires FAD as cofactor.

The catalysed reaction is 2 nitric oxide + NADPH + 2 O2 = 2 nitrate + NADP(+) + H(+). It catalyses the reaction 2 nitric oxide + NADH + 2 O2 = 2 nitrate + NAD(+) + H(+). Functionally, is involved in NO detoxification in an aerobic process, termed nitric oxide dioxygenase (NOD) reaction that utilizes O(2) and NAD(P)H to convert NO to nitrate, which protects the bacterium from various noxious nitrogen compounds. Therefore, plays a central role in the inducible response to nitrosative stress. This chain is Flavohemoprotein, found in Rhizobium meliloti (strain 1021) (Ensifer meliloti).